The chain runs to 459 residues: tRNA modification GTPase MnmE (459 aa).

R29, E91, and R130 together coordinate (6S)-5-formyl-5,6,7,8-tetrahydrofolate. Residues 225-381 (GVKVAIVGRP…LEEALEQLVT (157 aa)) form the TrmE-type G domain. A K(+)-binding site is contributed by N235. GTP contacts are provided by residues 235–240 (NVGKSS), 254–260 (TDLPGTT), and 279–282 (DTAG). Residue S239 participates in Mg(2+) binding. T254, L256, and T259 together coordinate K(+). T260 contributes to the Mg(2+) binding site. A (6S)-5-formyl-5,6,7,8-tetrahydrofolate-binding site is contributed by K459.

The protein belongs to the TRAFAC class TrmE-Era-EngA-EngB-Septin-like GTPase superfamily. TrmE GTPase family. As to quaternary structure, homodimer. Heterotetramer of two MnmE and two MnmG subunits. Requires K(+) as cofactor.

It is found in the cytoplasm. In terms of biological role, exhibits a very high intrinsic GTPase hydrolysis rate. Involved in the addition of a carboxymethylaminomethyl (cmnm) group at the wobble position (U34) of certain tRNAs, forming tRNA-cmnm(5)s(2)U34. The polypeptide is tRNA modification GTPase MnmE (Synechococcus sp. (strain JA-3-3Ab) (Cyanobacteria bacterium Yellowstone A-Prime)).